A 543-amino-acid polypeptide reads, in one-letter code: Glucose transporter HT1 (543 aa).

Residues 1-24 (MPEYPTEDTNASGKTSGSSPDDHT) form a disordered region. The Cytoplasmic segment spans residues 1 to 38 (MPEYPTEDTNASGKTSGSSPDDHTDDNAPSFFSCENLC). Over residues 7–19 (EDTNASGKTSGSS) the composition is skewed to polar residues. The helical transmembrane segment at 39-59 (IVQVPVSTGSLNGFSIGFVAV) threads the bilayer. The Extracellular segment spans residues 60–120 (YMHLYEIFSG…GSGYNSLESG (61 aa)). 2 N-linked (GlcNAc...) asparagine glycosylation sites follow: N90 and N91. Residues 121-141 (LFACSMIVGSMIGSIFAGKFL) form a helical membrane-spanning segment. Topologically, residues 142–147 (SKFGLK) are cytoplasmic. Residues 148 to 168 (MSFIVSGVLGIVGSALIHVAT) form a helical membrane-spanning segment. The Extracellular segment spans residues 169–172 (RGST). A helical membrane pass occupies residues 173 to 193 (LWVMCVGRFLMGLVLGLVCVA). Over 194–212 (SPMYVNENAHPKYRKTIGV) the chain is Cytoplasmic. Residues 213-233 (LFQVFTTFGIMFAALLGLAIV) form a helical membrane-spanning segment. Topologically, residues 234–248 (KTPGHDKASGLLWRM) are extracellular. A helical membrane pass occupies residues 249-269 (QVFCSVSTALSALLLVLGLVV). At 270-300 (RKSKTSFAGGVDSAGEGVLDPNEYSVRQMLG) the chain is on the cytoplasmic side. A helical transmembrane segment spans residues 301-321 (PLAVGAVTAGTLQLTGINAVM). Over 322 to 337 (NYAPEIMRNIGMDPME) the chain is Extracellular. The helical transmembrane segment at 338–358 (GNSAVMSWNFVTALVAIPLVS) threads the bilayer. The Cytoplasmic portion of the chain corresponds to 359–364 (RFTMRQ). Residues 365-385 (LFLACSFMASCACLIMCGIPV) traverse the membrane as a helical segment. The Extracellular portion of the chain corresponds to 386 to 400 (YPGVASVDNRNIVAT). Residues 401 to 421 (VGIAVFIAAFEFGVGSCFFVL) form a helical membrane-spanning segment. At 422 to 436 (AQDLFPRSFRPTGSS) the chain is on the cytoplasmic side. Residues 437 to 457 (FVVMAQFIFNIMINLLYPITV) form a helical membrane-spanning segment. Over 458–470 (EAISGGKGKSPEK) the chain is Extracellular. Residues 471–491 (GQSVSFIIFGIIGIICFVLQL) traverse the membrane as a helical segment. Residues 492 to 543 (RYLTPWEDGQGTSTSPTARCNAPTSPNNGEGEPATADMSPVEMSTPKHSGAA) are Cytoplasmic-facing. Over residues 503–519 (TSTSPTARCNAPTSPNN) the composition is skewed to polar residues. Residues 503–543 (TSTSPTARCNAPTSPNNGEGEPATADMSPVEMSTPKHSGAA) are disordered.

This sequence belongs to the major facilitator superfamily. Sugar transporter (TC 2.A.1.1) family.

It localises to the membrane. In terms of biological role, facilitative glucose transporter. Binds D-fructose and cytochalasin-B, but not D-galactose. This Trypanosoma vivax (Duttonella vivax) protein is Glucose transporter HT1 (HT1).